A 454-amino-acid chain; its full sequence is Toxin CfTX-A (454 aa).

The signal sequence occupies residues methionine 1–glycine 18. The propeptide occupies asparagine 19 to arginine 25. Residues valine 27–glutamate 61 are a coiled coil.

This sequence belongs to the jellyfish toxin family. Type II subfamily. As to quaternary structure, oligomer. In terms of processing, contains 2 disulfide bonds. In terms of tissue distribution, nematocytes.

Its subcellular location is the secreted. The protein resides in the nematocyst. It is found in the target cell membrane. The fraction containing this toxin and CfTX-A shows potent hemolytic activity. This fraction causes minor effects on the cardiovascular system of anesthetized rats (at 25 ug/kg), since it has no significant effects on heart rate but produces relatively small increases in mean arterial pressure. In Chironex fleckeri (Australian box jellyfish), this protein is Toxin CfTX-A.